A 243-amino-acid polypeptide reads, in one-letter code: Mesoderm posterior protein 1 (243 aa).

Residues 1–86 (MAQPLCEPRS…QRQSASEREK (86 aa)) form a disordered region. Polar residues predominate over residues 27-36 (DGNSVCSPAW). A bHLH domain is found at 76–130 (GQRQSASEREKLRMRTLARALHELRRFLPPSVAPTGQNLTKIETLRLAIRYIGHL). The CPLCP motif lies at 153–157 (CPLCP). Residues 204–228 (AETASQERQEMEPSPSSPLFSSDML) form a disordered region.

In terms of tissue distribution, no expression was detected in adult tissues except the testis. Expression in the testis was regulated developmentally; expressed 2 weeks after birth, and increases, reaching the full expression level in mature testes.

It localises to the nucleus. Transcription factor. Plays a role in the epithelialization of somitic mesoderm and in the development of cardiac mesoderm. Defines the rostrocaudal patterning of the somites by participating in distinct Notch pathways. This is Mesoderm posterior protein 1 (Mesp1) from Mus musculus (Mouse).